The chain runs to 123 residues: TYMS opposite strand protein (123 aa).

The tract at residues Met-57 to Ile-111 is disordered. Basic residues predominate over residues His-91–Leu-101.

The polypeptide is TYMS opposite strand protein (TYMSOS) (Homo sapiens (Human)).